We begin with the raw amino-acid sequence, 286 residues long: Ribosomal RNA small subunit methyltransferase A (286 aa).

Residues Asn-33, Val-35, Gly-60, Glu-81, Asp-111, and Asn-129 each contribute to the S-adenosyl-L-methionine site.

It belongs to the class I-like SAM-binding methyltransferase superfamily. rRNA adenine N(6)-methyltransferase family. RsmA subfamily.

It is found in the cytoplasm. The catalysed reaction is adenosine(1518)/adenosine(1519) in 16S rRNA + 4 S-adenosyl-L-methionine = N(6)-dimethyladenosine(1518)/N(6)-dimethyladenosine(1519) in 16S rRNA + 4 S-adenosyl-L-homocysteine + 4 H(+). Functionally, specifically dimethylates two adjacent adenosines (A1518 and A1519) in the loop of a conserved hairpin near the 3'-end of 16S rRNA in the 30S particle. May play a critical role in biogenesis of 30S subunits. The polypeptide is Ribosomal RNA small subunit methyltransferase A (Streptomyces coelicolor (strain ATCC BAA-471 / A3(2) / M145)).